The sequence spans 673 residues: Glycine--tRNA ligase beta subunit (673 aa).

It belongs to the class-II aminoacyl-tRNA synthetase family. As to quaternary structure, tetramer of two alpha and two beta subunits.

The protein localises to the cytoplasm. The enzyme catalyses tRNA(Gly) + glycine + ATP = glycyl-tRNA(Gly) + AMP + diphosphate. This Lactococcus lactis subsp. lactis (strain IL1403) (Streptococcus lactis) protein is Glycine--tRNA ligase beta subunit.